A 219-amino-acid chain; its full sequence is Thiopurine S-methyltransferase (219 aa).

S-adenosyl-L-methionine-binding residues include Trp-10, Leu-45, Glu-66, and Arg-123.

The protein belongs to the class I-like SAM-binding methyltransferase superfamily. TPMT family.

It localises to the cytoplasm. It carries out the reaction S-adenosyl-L-methionine + a thiopurine = S-adenosyl-L-homocysteine + a thiopurine S-methylether.. The sequence is that of Thiopurine S-methyltransferase from Marinobacter nauticus (strain ATCC 700491 / DSM 11845 / VT8) (Marinobacter aquaeolei).